Reading from the N-terminus, the 180-residue chain is Small ribosomal subunit protein uS4 (180 aa).

In terms of domain architecture, S4 RNA-binding spans 103 to 174; sequence RRLQTIVYKK…HPERMMIEKA (72 aa).

The protein belongs to the universal ribosomal protein uS4 family. As to quaternary structure, part of the 30S ribosomal subunit. Contacts protein S5. The interaction surface between S4 and S5 is involved in control of translational fidelity.

In terms of biological role, one of the primary rRNA binding proteins, it binds directly to 16S rRNA where it nucleates assembly of the body of the 30S subunit. Its function is as follows. With S5 and S12 plays an important role in translational accuracy. The polypeptide is Small ribosomal subunit protein uS4 (Pyrococcus abyssi (strain GE5 / Orsay)).